A 306-amino-acid chain; its full sequence is D-alanine--D-alanine ligase B (306 aa).

Catalysis depends on residues Glu15 and Ser150. An ATP-grasp domain is found at 101–303 (KLLWQGAGLP…FSQLVVRILE (203 aa)). Position 134 to 189 (134 to 189 (ISALGLPVIVKPSREGSSVGMSKVVAENALQDALRLAFQHDEEVLIEKWLSGPEFT)) interacts with ATP. Residues Asp257, Glu270, and Asn272 each coordinate Mg(2+). The active site involves Ser281.

The protein belongs to the D-alanine--D-alanine ligase family. Monomer. Requires Mg(2+) as cofactor. It depends on Mn(2+) as a cofactor.

The protein localises to the cytoplasm. The catalysed reaction is 2 D-alanine + ATP = D-alanyl-D-alanine + ADP + phosphate + H(+). Its pathway is cell wall biogenesis; peptidoglycan biosynthesis. Its function is as follows. Cell wall formation. In Escherichia coli (strain K12), this protein is D-alanine--D-alanine ligase B (ddlB).